A 172-amino-acid chain; its full sequence is Large ribosomal subunit protein uL10 (172 aa).

Belongs to the universal ribosomal protein uL10 family. In terms of assembly, part of the ribosomal stalk of the 50S ribosomal subunit. The N-terminus interacts with L11 and the large rRNA to form the base of the stalk. The C-terminus forms an elongated spine to which L12 dimers bind in a sequential fashion forming a multimeric L10(L12)X complex.

Forms part of the ribosomal stalk, playing a central role in the interaction of the ribosome with GTP-bound translation factors. This is Large ribosomal subunit protein uL10 (rplJ) from Liberibacter africanus (Citrus greening disease).